Reading from the N-terminus, the 291-residue chain is tRNA (guanine-N(1)-)-methyltransferase (291 aa).

S-adenosyl-L-methionine contacts are provided by residues Gly160 and 184–189 (IGDYVL).

Belongs to the RNA methyltransferase TrmD family. In terms of assembly, homodimer.

Its subcellular location is the cytoplasm. The catalysed reaction is guanosine(37) in tRNA + S-adenosyl-L-methionine = N(1)-methylguanosine(37) in tRNA + S-adenosyl-L-homocysteine + H(+). Functionally, specifically methylates guanosine-37 in various tRNAs. The polypeptide is tRNA (guanine-N(1)-)-methyltransferase (Corynebacterium efficiens (strain DSM 44549 / YS-314 / AJ 12310 / JCM 11189 / NBRC 100395)).